The following is a 598-amino-acid chain: Sulfoacetaldehyde acetyltransferase (598 aa).

It belongs to the TPP enzyme family. Homotetramer. Mg(2+) is required as a cofactor. Requires thiamine diphosphate as cofactor.

The protein localises to the cytoplasm. It catalyses the reaction acetyl phosphate + sulfite + H(+) = sulfoacetaldehyde + phosphate. It participates in organosulfur degradation; taurine degradation via aerobic pathway; acetyl phosphate and sulfite from taurine: step 2/2. The sequence is that of Sulfoacetaldehyde acetyltransferase from Castellaniella defragrans (Alcaligenes defragrans).